Consider the following 256-residue polypeptide: MARRPLVMGNWKLNGSKAFTKELIAGLKAELADVKGCDVAIAPPVMYLAEAEAALAGQSVIALGAQNVDVNVQGAFTGDISTEMLKDFGAKYIIIGHSERRTYHKECDTFIAKKFAALKAAGLVPVLCIGETEAENEAGQTEAVCAKQIDAVIDALGVEAFNGAVIAYEPIWAIGTGKSATPAQAQAVHAFIRGHIAAKSQAVADQVIIQYGGSVNDANAAELFTQPDIDGALVGGASLKAPAFAVIVKAAEKAKA.

10–12 (NWK) serves as a coordination point for substrate. The Electrophile role is filled by His-97. Glu-169 (proton acceptor) is an active-site residue. Residues Gly-175, Ser-214, and 235–236 (GG) each bind substrate.

This sequence belongs to the triosephosphate isomerase family. In terms of assembly, homodimer.

The protein resides in the cytoplasm. It carries out the reaction D-glyceraldehyde 3-phosphate = dihydroxyacetone phosphate. Its pathway is carbohydrate biosynthesis; gluconeogenesis. It participates in carbohydrate degradation; glycolysis; D-glyceraldehyde 3-phosphate from glycerone phosphate: step 1/1. Involved in the gluconeogenesis. Catalyzes stereospecifically the conversion of dihydroxyacetone phosphate (DHAP) to D-glyceraldehyde-3-phosphate (G3P). This chain is Triosephosphate isomerase, found in Actinobacillus pleuropneumoniae serotype 7 (strain AP76).